The following is a 762-amino-acid chain: 5-methyltetrahydropteroyltriglutamate--homocysteine methyltransferase (762 aa).

5-methyltetrahydropteroyltri-L-glutamate contacts are provided by residues 17-20 (REWK) and Lys111. L-homocysteine is bound by residues 435–437 (IGS) and Glu488. L-methionine-binding positions include 435–437 (IGS) and Glu488. 5-methyltetrahydropteroyltri-L-glutamate-binding positions include 519-520 (RC) and Trp565. Asp603 is an L-homocysteine binding site. Asp603 provides a ligand contact to L-methionine. A 5-methyltetrahydropteroyltri-L-glutamate-binding site is contributed by Glu609. His645, Cys647, and Glu669 together coordinate Zn(2+). Residue His698 is the Proton donor of the active site. Zn(2+) is bound at residue Cys730.

The protein belongs to the vitamin-B12 independent methionine synthase family. The cofactor is Zn(2+).

It carries out the reaction 5-methyltetrahydropteroyltri-L-glutamate + L-homocysteine = tetrahydropteroyltri-L-glutamate + L-methionine. The protein operates within amino-acid biosynthesis; L-methionine biosynthesis via de novo pathway; L-methionine from L-homocysteine (MetE route): step 1/1. Catalyzes the transfer of a methyl group from 5-methyltetrahydrofolate to homocysteine resulting in methionine formation. The polypeptide is 5-methyltetrahydropteroyltriglutamate--homocysteine methyltransferase (Bacillus cereus (strain AH187)).